Reading from the N-terminus, the 535-residue chain is T-complex protein 1 subunit zeta 2 (535 aa).

Belongs to the TCP-1 chaperonin family. As to quaternary structure, heterooligomeric complex of about 850 to 900 kDa that forms two stacked rings, 12 to 16 nm in diameter.

The protein resides in the cytoplasm. Its function is as follows. Molecular chaperone; assists the folding of proteins upon ATP hydrolysis. Known to play a role, in vitro, in the folding of actin and tubulin. The sequence is that of T-complex protein 1 subunit zeta 2 from Arabidopsis thaliana (Mouse-ear cress).